The following is a 371-amino-acid chain: LIM domain-binding protein 2 (371 aa).

Disordered regions lie at residues 244–289 and 325–371; these read APPA…AAAN and QYDA…QASQ. A compositionally biased stretch (low complexity) spans 263 to 289; the sequence is STSSTSNSSAGNNANSTNSKKKSAAAN. The region spanning 296–335 is the LIM interaction domain (LID) domain; the sequence is DVMVVGEPTLMGGEFGDEDERLITRLENTQYDAANGMDDE. The segment covering 339 to 371 has biased composition (polar residues); it reads NNSPALGNNSPWNSKPPANQETKSENPTPQASQ.

This sequence belongs to the LDB family. First expressed at stages 15-16 in presumptive limb mesoderm. As limb outgrowth proceeds, expressed in the entire limb bud, concentrating in the distal mesoderm throughout limb development. Both hindlimbs and forelimbs exhibit similar expression patterns.

Its subcellular location is the nucleus. Functionally, binds to the LIM domain of a wide variety of LIM domain-containing transcription factors. The protein is LIM domain-binding protein 2 (LDB2) of Gallus gallus (Chicken).